The following is a 1517-amino-acid chain: DNA-directed RNA polymerase subunit beta' (1517 aa).

Zn(2+)-binding residues include Cys-71, Cys-73, Cys-86, and Cys-89. The Mg(2+) site is built by Asp-482, Asp-484, and Asp-486. The Zn(2+) site is built by Cys-812, Cys-886, Cys-893, and Cys-896.

Belongs to the RNA polymerase beta' chain family. As to quaternary structure, the RNAP catalytic core consists of 2 alpha, 1 beta, 1 beta' and 1 omega subunit. When a sigma factor is associated with the core the holoenzyme is formed, which can initiate transcription. Mg(2+) is required as a cofactor. Zn(2+) serves as cofactor.

It carries out the reaction RNA(n) + a ribonucleoside 5'-triphosphate = RNA(n+1) + diphosphate. In terms of biological role, DNA-dependent RNA polymerase catalyzes the transcription of DNA into RNA using the four ribonucleoside triphosphates as substrates. The chain is DNA-directed RNA polymerase subunit beta' from Campylobacter jejuni subsp. jejuni serotype O:23/36 (strain 81-176).